A 330-amino-acid chain; its full sequence is Malate dehydrogenase (330 aa).

Residue glycine 15–glycine 21 coordinates NAD(+). Substrate is bound by residues arginine 95 and arginine 101. NAD(+) contacts are provided by residues asparagine 108, glutamine 115, and valine 132–asparagine 134. Asparagine 134 and arginine 165 together coordinate substrate. The active-site Proton acceptor is the histidine 190.

This sequence belongs to the LDH/MDH superfamily. MDH type 2 family.

The catalysed reaction is (S)-malate + NAD(+) = oxaloacetate + NADH + H(+). Catalyzes the reversible oxidation of malate to oxaloacetate. In Corynebacterium jeikeium (strain K411), this protein is Malate dehydrogenase.